Consider the following 298-residue polypeptide: Super small secreted glycoprotein (298 aa).

The first 32 residues, 1–32, serve as a signal peptide directing secretion; sequence MGVTGILQLPRDRFKRTSFFLWVIILFQRTFS. An N-linked (GlcNAc...) asparagine; by host glycan is attached at asparagine 40. 2 disulfide bridges follow: cysteine 108-cysteine 135 and cysteine 121-cysteine 147. N-linked (GlcNAc...) asparagine; by host glycosylation is found at asparagine 204, asparagine 228, asparagine 238, asparagine 257, and asparagine 268.

It belongs to the filoviruses glycoprotein family.

The protein resides in the secreted. The protein is Super small secreted glycoprotein (GP) of Epomops franqueti (Franquet's epauletted fruit bat).